Reading from the N-terminus, the 468-residue chain is Phenylalanine--tRNA ligase alpha subunit (468 aa).

L-phenylalanine contacts are provided by residues threonine 311, glutamine 350 to aspartate 352, and phenylalanine 390. Glutamate 392 is a Mg(2+) binding site.

This sequence belongs to the class-II aminoacyl-tRNA synthetase family. Phe-tRNA synthetase alpha subunit type 2 subfamily. Tetramer of two alpha and two beta subunits. The cofactor is Mg(2+).

Its subcellular location is the cytoplasm. It catalyses the reaction tRNA(Phe) + L-phenylalanine + ATP = L-phenylalanyl-tRNA(Phe) + AMP + diphosphate + H(+). The polypeptide is Phenylalanine--tRNA ligase alpha subunit (Saccharolobus solfataricus (strain ATCC 35092 / DSM 1617 / JCM 11322 / P2) (Sulfolobus solfataricus)).